A 303-amino-acid polypeptide reads, in one-letter code: Coenzyme PQQ synthesis protein B (303 aa).

Belongs to the PqqB family.

It functions in the pathway cofactor biosynthesis; pyrroloquinoline quinone biosynthesis. Functionally, may be involved in the transport of PQQ or its precursor to the periplasm. In Rhizobium meliloti (strain 1021) (Ensifer meliloti), this protein is Coenzyme PQQ synthesis protein B.